A 231-amino-acid chain; its full sequence is Protein C activator (231 aa).

The Peptidase S1 domain occupies Val1–Ser222. Cystine bridges form between Cys7–Cys138, Cys25–Cys41, Cys73–Cys229, Cys117–Cys183, Cys149–Cys162, and Cys173–Cys198. Asn21 carries N-linked (GlcNAc...) asparagine glycosylation. His40 serves as the catalytic Charge relay system. N-linked (GlcNAc...) asparagine glycosylation is present at Asn78. Residue Asp85 is the Charge relay system of the active site. A glycan (N-linked (GlcNAc...) asparagine) is linked at Asn129. Ser177 functions as the Charge relay system in the catalytic mechanism.

This sequence belongs to the peptidase S1 family. Snake venom subfamily. In terms of assembly, monomer. In terms of tissue distribution, expressed by the venom gland.

The protein localises to the secreted. In terms of biological role, snake venom serine protease that selectively cleaves the heavy chain of protein C (PROC). This activation is thrombomodulin-independent. This Agkistrodon contortrix contortrix (Southern copperhead) protein is Protein C activator.